A 447-amino-acid chain; its full sequence is MNAWEVNFDGLVGLTHHYAGLSFGNEASTRHRFQVSNPRLAAKQGLLKMKKLADAGFPQAVIPPHERPFIPVLRQLGFRGSDEQVLEKVARQAPHWLSSVSSASPMWVANAATIAPSADTLDGKVHLTVANLNNKFHRSLEAPVTESLLKAIFNDEEKFSVHSALPQVALLGDEGAANHNRLGGHYGEPGMQLFVYGREEGNDTRPSRYPARQTREASEAVARLNQVNPQQVIFAQQNPDVIDQGVFHNDVIAVSNRQVLFCHQQAFARQSQLLANLRARVNGFMAIEVPATQVFVSDAVSTYLFNSQLLSRDDGSMVLVLPQECREHAGVWRYLNELLAADNPISELKVFDLRESMANGGGPACLRLRVVLTEEERRAVNPAVMMNDTLFNALNDWVDRYYRDRLTAADLADPQLLREGREALDTLTQLLDLGSVYPFQREGGGNG.

Substrate is bound by residues 19–28, asparagine 110, and 137–138; these read AGLSFGNEAS and HR. The active site involves glutamate 174. Arginine 212 is a binding site for substrate. Residue histidine 248 is part of the active site. Positions 250 and 359 each coordinate substrate. Cysteine 365 acts as the Nucleophile in catalysis.

This sequence belongs to the succinylarginine dihydrolase family. In terms of assembly, homodimer.

The catalysed reaction is N(2)-succinyl-L-arginine + 2 H2O + 2 H(+) = N(2)-succinyl-L-ornithine + 2 NH4(+) + CO2. It participates in amino-acid degradation; L-arginine degradation via AST pathway; L-glutamate and succinate from L-arginine: step 2/5. Its function is as follows. Catalyzes the hydrolysis of N(2)-succinylarginine into N(2)-succinylornithine, ammonia and CO(2). The protein is N-succinylarginine dihydrolase of Escherichia coli O1:K1 / APEC.